A 432-amino-acid polypeptide reads, in one-letter code: Enolase (432 aa).

Gln-167 contributes to the (2R)-2-phosphoglycerate binding site. Residue Glu-209 is the Proton donor of the active site. 3 residues coordinate Mg(2+): Asp-246, Glu-289, and Asp-316. The (2R)-2-phosphoglycerate site is built by Lys-341, Arg-370, Ser-371, and Lys-392. Lys-341 (proton acceptor) is an active-site residue.

This sequence belongs to the enolase family. Mg(2+) serves as cofactor.

The protein resides in the cytoplasm. The protein localises to the secreted. It is found in the cell surface. The enzyme catalyses (2R)-2-phosphoglycerate = phosphoenolpyruvate + H2O. Its pathway is carbohydrate degradation; glycolysis; pyruvate from D-glyceraldehyde 3-phosphate: step 4/5. In terms of biological role, catalyzes the reversible conversion of 2-phosphoglycerate (2-PG) into phosphoenolpyruvate (PEP). It is essential for the degradation of carbohydrates via glycolysis. The sequence is that of Enolase from Petrotoga mobilis (strain DSM 10674 / SJ95).